A 113-amino-acid chain; its full sequence is UPF0342 protein SPy_0811/M5005_Spy0626 (113 aa).

The protein belongs to the UPF0342 family.

This Streptococcus pyogenes serotype M1 protein is UPF0342 protein SPy_0811/M5005_Spy0626.